Consider the following 346-residue polypeptide: Phenylalanine--tRNA ligase alpha subunit (346 aa).

Position 260 (Glu-260) interacts with Mg(2+).

This sequence belongs to the class-II aminoacyl-tRNA synthetase family. Phe-tRNA synthetase alpha subunit type 1 subfamily. As to quaternary structure, tetramer of two alpha and two beta subunits. It depends on Mg(2+) as a cofactor.

The protein localises to the cytoplasm. It carries out the reaction tRNA(Phe) + L-phenylalanine + ATP = L-phenylalanyl-tRNA(Phe) + AMP + diphosphate + H(+). The polypeptide is Phenylalanine--tRNA ligase alpha subunit (Herpetosiphon aurantiacus (strain ATCC 23779 / DSM 785 / 114-95)).